The chain runs to 385 residues: 1-deoxy-D-xylulose 5-phosphate reductoisomerase 1 (385 aa).

The NADPH site is built by T11, G12, S13, I14, N39, and N122. Residue K123 participates in 1-deoxy-D-xylulose 5-phosphate binding. E124 is a binding site for NADPH. D148 is a binding site for Mn(2+). S149, E150, S174, and H197 together coordinate 1-deoxy-D-xylulose 5-phosphate. Residue E150 coordinates Mn(2+). G203 is a binding site for NADPH. Positions 210, 215, 216, and 219 each coordinate 1-deoxy-D-xylulose 5-phosphate. Mn(2+) is bound at residue E219.

This sequence belongs to the DXR family. Mg(2+) serves as cofactor. It depends on Mn(2+) as a cofactor.

The enzyme catalyses 2-C-methyl-D-erythritol 4-phosphate + NADP(+) = 1-deoxy-D-xylulose 5-phosphate + NADPH + H(+). Its pathway is isoprenoid biosynthesis; isopentenyl diphosphate biosynthesis via DXP pathway; isopentenyl diphosphate from 1-deoxy-D-xylulose 5-phosphate: step 1/6. Catalyzes the NADPH-dependent rearrangement and reduction of 1-deoxy-D-xylulose-5-phosphate (DXP) to 2-C-methyl-D-erythritol 4-phosphate (MEP). The polypeptide is 1-deoxy-D-xylulose 5-phosphate reductoisomerase 1 (Bacillus anthracis).